A 301-amino-acid polypeptide reads, in one-letter code: Probable 2-oxoglutarate-dependent dioxygenase AOP1 (301 aa).

Positions 158-262 (TYYLTRLMKY…RYSTGLFSIP (105 aa)) constitute a Fe2OG dioxygenase domain. His-186, Asp-188, and His-243 together coordinate Fe cation. Arg-253 contacts 2-oxoglutarate.

This sequence belongs to the iron/ascorbate-dependent oxidoreductase family. It depends on Fe(2+) as a cofactor.

Its function is as follows. Probable 2-oxoglutarate-dependent dioxygenase that may be involved in glucosinolates biosynthesis. May play a role in the production of aliphatic glucosinolates. The polypeptide is Probable 2-oxoglutarate-dependent dioxygenase AOP1 (AOP1) (Arabidopsis thaliana (Mouse-ear cress)).